The following is a 93-amino-acid chain: WAP four-disulfide core domain protein 13 (93 aa).

The first 22 residues, 1–22 (MKPVLPLQFLVVFCLALQLVPG), serve as a signal peptide directing secretion. Residues 24-73 (PKQRVLKYILEPPPCISAPENCTHLCTMQEDCEKGFQCCSSFCGIVCSSE) enclose the WAP; atypical domain. 3 disulfides stabilise this stretch: cysteine 45–cysteine 66, cysteine 49–cysteine 61, and cysteine 55–cysteine 70.

It is found in the secreted. Putative acid-stable proteinase inhibitor. The protein is WAP four-disulfide core domain protein 13 (WFDC13) of Homo sapiens (Human).